Consider the following 316-residue polypeptide: MGAGHSHDHPGGNERSLKIALALTGTFLIAEVVGGVMTKSLALISDAAHMLTDTVALAIALAAIAIAKRPADKKRTFGYYRFEILAAAFNALLLFGVAIYILYEAYLRLKSPPQIESTGMFVVAVLGLIINLISMRMLSSGQSSSLNVKGAYLEVWSDLLGSVGVIAGAIIIRFTGWAWVDSAIAVLIGLWVLPRTWILLKSSLNVLLEGVPDDVDLAEVEKQILATPGVKSFHDLHIWALTSGKASLTVHVVNDTAVNPEMEVLPELKQMLADKFDITHVTIQFELAPCEQADAAQHFNASPALVGSKSLAAGGN.

Over 1-16 (MGAGHSHDHPGGNERS) the chain is Cytoplasmic. Residues 17 to 37 (LKIALALTGTFLIAEVVGGVM) form a helical membrane-spanning segment. Residues 38-46 (TKSLALISD) lie on the Periplasmic side of the membrane. A helical transmembrane segment spans residues 47 to 67 (AAHMLTDTVALAIALAAIAIA). At 68-81 (KRPADKKRTFGYYR) the chain is on the cytoplasmic side. A helical transmembrane segment spans residues 82–102 (FEILAAAFNALLLFGVAIYIL). Topologically, residues 103-114 (YEAYLRLKSPPQ) are periplasmic. Residues 115–135 (IESTGMFVVAVLGLIINLISM) traverse the membrane as a helical segment. The Cytoplasmic segment spans residues 136-151 (RMLSSGQSSSLNVKGA). 2 helical membrane-spanning segments follow: residues 152–172 (YLEV…AIII) and 174–194 (FTGW…WVLP). Topologically, residues 195–316 (RTWILLKSSL…GSKSLAAGGN (122 aa)) are cytoplasmic.

The protein belongs to the cation diffusion facilitator (CDF) transporter (TC 2.A.4) family. SLC30A subfamily.

It is found in the cell inner membrane. With respect to regulation, efflux is inhibited by FCCP. Its function is as follows. Mediates a low-level metal ion resistance, probably by efflux of cations from the cytoplasm into the periplasm. Also mediates resistance to cobalt, cadmium and zinc via regulation of the Czc system. May repress expression of the Czc system by an export of the inducing cations. Binds and transports zinc. Can also bind cobalt, copper and nickel. The polypeptide is Metal cation efflux system protein CzcD (czcD) (Cupriavidus metallidurans (strain ATCC 43123 / DSM 2839 / NBRC 102507 / CH34) (Ralstonia metallidurans)).